The following is a 661-amino-acid chain: Acetyl-coenzyme A synthetase (661 aa).

CoA is bound by residues 199–202 (RGGK) and threonine 317. Residues 393-395 (GEP), 417-422 (DTFWQT), aspartate 508, and arginine 523 contribute to the ATP site. Serine 531 contacts CoA. Residue arginine 534 coordinates ATP. Residue arginine 596 coordinates CoA.

It belongs to the ATP-dependent AMP-binding enzyme family.

The enzyme catalyses acetate + ATP + CoA = acetyl-CoA + AMP + diphosphate. In Coprinopsis cinerea (Inky cap fungus), this protein is Acetyl-coenzyme A synthetase (ACS-1).